Reading from the N-terminus, the 407-residue chain is Arylacetamide deacetylase-like 4 family member 1 (407 aa).

Topologically, residues 1-4 (MLYL) are cytoplasmic. Residues 5–25 (VGFLLATVCLLVLGVNVWVLI) form a helical; Signal-anchor for type II membrane protein membrane-spanning segment. The Lumenal portion of the chain corresponds to 26–407 (DHFLTIDVPP…NAVVSYIKDL (382 aa)). The short motif at 119-121 (HGG) is the Involved in the stabilization of the negatively charged intermediate by the formation of the oxyanion hole element. The N-linked (GlcNAc...) asparagine glycan is linked to Asn-168. Residues Ser-193, Asp-347, and His-377 contribute to the active site.

Belongs to the 'GDXG' lipolytic enzyme family.

Its subcellular location is the membrane. The protein is Arylacetamide deacetylase-like 4 family member 1 of Mus musculus (Mouse).